A 717-amino-acid chain; its full sequence is RNA helicase NPH-II (717 aa).

A Helicase ATP-binding domain is found at F193–Y384. G206–T213 serves as a coordination point for ATP. Positions D331–H334 match the DEXH box motif. The 161-residue stretch at I406–Y566 folds into the Helicase C-terminal domain.

The protein belongs to the DEAD box helicase family. DEAH subfamily. Monomer.

It localises to the virion. It carries out the reaction ATP + H2O = ADP + phosphate + H(+). Its function is as follows. NTP-dependent helicase that catalyzes unidirectional unwinding of 3'tailed duplex RNAs and plays an important role during transcription of early mRNAs, presumably by preventing R-loop formation behind the elongating RNA polymerase. Might also play a role in the export of newly synthesized mRNA chains out of the core into the cytoplasm. Required for replication and propagation of viral particles. The polypeptide is RNA helicase NPH-II (NPH2) (Melanoplus sanguinipes (Migratory grasshopper)).